The primary structure comprises 221 residues: UPF0758 protein YicR (221 aa).

In terms of domain architecture, MPN spans A99–I221. H170, H172, and D183 together coordinate Zn(2+). The JAMM motif motif lies at H170–D183.

Belongs to the UPF0758 family. YicR subfamily.

The protein is UPF0758 protein YicR of Salmonella arizonae (strain ATCC BAA-731 / CDC346-86 / RSK2980).